We begin with the raw amino-acid sequence, 335 residues long: Pyridoxal 5'-phosphate synthase subunit PdxS (335 aa).

Aspartate 59 contacts D-ribose 5-phosphate. Lysine 116 functions as the Schiff-base intermediate with D-ribose 5-phosphate in the catalytic mechanism. Glycine 188 is a binding site for D-ribose 5-phosphate. Lysine 200 is a D-glyceraldehyde 3-phosphate binding site. Residues glycine 253 and 274–275 each bind D-ribose 5-phosphate; that span reads GS.

The protein belongs to the PdxS/SNZ family. As to quaternary structure, in the presence of PdxT, forms a dodecamer of heterodimers.

The catalysed reaction is aldehydo-D-ribose 5-phosphate + D-glyceraldehyde 3-phosphate + L-glutamine = pyridoxal 5'-phosphate + L-glutamate + phosphate + 3 H2O + H(+). It participates in cofactor biosynthesis; pyridoxal 5'-phosphate biosynthesis. Its function is as follows. Catalyzes the formation of pyridoxal 5'-phosphate from ribose 5-phosphate (RBP), glyceraldehyde 3-phosphate (G3P) and ammonia. The ammonia is provided by the PdxT subunit. Can also use ribulose 5-phosphate and dihydroxyacetone phosphate as substrates, resulting from enzyme-catalyzed isomerization of RBP and G3P, respectively. This is Pyridoxal 5'-phosphate synthase subunit PdxS from Hyperthermus butylicus (strain DSM 5456 / JCM 9403 / PLM1-5).